Reading from the N-terminus, the 173-residue chain is Small ribosomal subunit protein uS5 (173 aa).

Positions 18-81 (YVEKLVKLNR…EKAKANMVTF (64 aa)) constitute an S5 DRBM domain.

Belongs to the universal ribosomal protein uS5 family. Part of the 30S ribosomal subunit. Contacts proteins S4 and S8.

In terms of biological role, with S4 and S12 plays an important role in translational accuracy. Located at the back of the 30S subunit body where it stabilizes the conformation of the head with respect to the body. This Treponema denticola (strain ATCC 35405 / DSM 14222 / CIP 103919 / JCM 8153 / KCTC 15104) protein is Small ribosomal subunit protein uS5.